A 242-amino-acid polypeptide reads, in one-letter code: Pyridoxine 5'-phosphate synthase (242 aa).

Asn8 is a 3-amino-2-oxopropyl phosphate binding site. 10 to 11 contributes to the 1-deoxy-D-xylulose 5-phosphate binding site; it reads DH. 3-amino-2-oxopropyl phosphate is bound at residue Arg19. His44 acts as the Proton acceptor in catalysis. 1-deoxy-D-xylulose 5-phosphate-binding residues include Arg46 and His51. Glu71 (proton acceptor) is an active-site residue. Residue Thr101 participates in 1-deoxy-D-xylulose 5-phosphate binding. His193 functions as the Proton donor in the catalytic mechanism. Residues Gly194 and 215–216 contribute to the 3-amino-2-oxopropyl phosphate site; that span reads GF.

The protein belongs to the PNP synthase family. Homooctamer; tetramer of dimers.

The protein localises to the cytoplasm. It carries out the reaction 3-amino-2-oxopropyl phosphate + 1-deoxy-D-xylulose 5-phosphate = pyridoxine 5'-phosphate + phosphate + 2 H2O + H(+). It functions in the pathway cofactor biosynthesis; pyridoxine 5'-phosphate biosynthesis; pyridoxine 5'-phosphate from D-erythrose 4-phosphate: step 5/5. Its function is as follows. Catalyzes the complicated ring closure reaction between the two acyclic compounds 1-deoxy-D-xylulose-5-phosphate (DXP) and 3-amino-2-oxopropyl phosphate (1-amino-acetone-3-phosphate or AAP) to form pyridoxine 5'-phosphate (PNP) and inorganic phosphate. This chain is Pyridoxine 5'-phosphate synthase, found in Elusimicrobium minutum (strain Pei191).